A 171-amino-acid polypeptide reads, in one-letter code: RNA silencing suppressor p19 (171 aa).

Residues 1 to 15 are compositionally biased toward basic and acidic residues; sequence MERAIPGNDTREPAY. The interval 1 to 32 is disordered; it reads MERAIPGNDTREPAYGERWNGGPGGSTSPFQL.

Belongs to the tombusvirus protein p19 family. As to quaternary structure, homodimer.

Its function is as follows. Viral suppressor of RNA silencing which binds specifically to silencing RNAs (siRNAs). Acts as a molecular caliper to specifically select siRNAs based on the length of the duplex region of the RNA. The polypeptide is RNA silencing suppressor p19 (Capsicum annuum (Capsicum pepper)).